We begin with the raw amino-acid sequence, 943 residues long: Isoleucine--tRNA ligase (943 aa).

The 'HIGH' region signature appears at 58–68 (PYANGNIHIGH). Glu567 is a binding site for L-isoleucyl-5'-AMP. Positions 608–612 (KMSKS) match the 'KMSKS' region motif. Residue Lys611 coordinates ATP. Zn(2+)-binding residues include Cys906, Cys909, Cys926, and Cys929.

Belongs to the class-I aminoacyl-tRNA synthetase family. IleS type 1 subfamily. Monomer. Requires Zn(2+) as cofactor.

The protein resides in the cytoplasm. The catalysed reaction is tRNA(Ile) + L-isoleucine + ATP = L-isoleucyl-tRNA(Ile) + AMP + diphosphate. Functionally, catalyzes the attachment of isoleucine to tRNA(Ile). As IleRS can inadvertently accommodate and process structurally similar amino acids such as valine, to avoid such errors it has two additional distinct tRNA(Ile)-dependent editing activities. One activity is designated as 'pretransfer' editing and involves the hydrolysis of activated Val-AMP. The other activity is designated 'posttransfer' editing and involves deacylation of mischarged Val-tRNA(Ile). The polypeptide is Isoleucine--tRNA ligase (Pseudomonas savastanoi pv. phaseolicola (strain 1448A / Race 6) (Pseudomonas syringae pv. phaseolicola (strain 1448A / Race 6))).